Here is a 496-residue protein sequence, read N- to C-terminus: Glutathione reductase, cytosolic (496 aa).

The FAD site is built by S32, G33, E52, T69, C70, and K78. S32 is a binding site for glutathione. A disulfide bond links C70 and C75. Position 127 (Y127) interacts with glutathione. G143 contacts FAD. Positions 208, 211, 214, 231, 237, and 294 each coordinate NADP(+). D335 and T343 together coordinate FAD. A373 lines the NADP(+) pocket. H469 serves as a coordination point for FAD. Residue H469 is the Proton acceptor of the active site.

Belongs to the class-I pyridine nucleotide-disulfide oxidoreductase family. As to quaternary structure, homodimer. FAD is required as a cofactor.

The protein resides in the cytoplasm. It carries out the reaction 2 glutathione + NADP(+) = glutathione disulfide + NADPH + H(+). Catalyzes the reduction of glutathione disulfide (GSSG) to reduced glutathione (GSH). Constitutes the major mechanism to maintain a high GSH:GSSG ratio in the cytosol. The chain is Glutathione reductase, cytosolic (GRC2) from Oryza sativa subsp. japonica (Rice).